Here is a 539-residue protein sequence, read N- to C-terminus: Squalene monooxygenase SE1 (539 aa).

The next 2 membrane-spanning stretches (helical) occupy residues 22 to 42 (LLID…FLLL) and 71 to 91 (IAGS…ALAY). Residues 84 to 85 (VA), 104 to 105 (ER), arginine 112, arginine 183, valine 199, aspartate 361, and methionine 374 each bind FAD. Residues 472-492 (LFLHFFAVAIYGVGRLLIPFP) form a helical membrane-spanning segment.

Belongs to the squalene monooxygenase family. Requires FAD as cofactor. Mostly expressed in flower buds and leaves, and, to a lower extent, at high levels thought, in roots and petioles. In petioles, preferentially observed in vascular bundle tissue (phloem cells and parenchymatous cells near xylem) and resin ducts.

It localises to the microsome membrane. The protein resides in the endoplasmic reticulum membrane. The enzyme catalyses squalene + reduced [NADPH--hemoprotein reductase] + O2 = (S)-2,3-epoxysqualene + oxidized [NADPH--hemoprotein reductase] + H2O + H(+). Its pathway is terpene metabolism; lanosterol biosynthesis; lanosterol from farnesyl diphosphate: step 2/3. Functionally, component of the triterpene saponins (e.g. ginsenosides or panaxosides) and phytosterols biosynthetic pathways. Catalyzes the first oxygenation step in sterol biosynthesis and is suggested to be one of the rate-limiting enzymes in this pathway. The polypeptide is Squalene monooxygenase SE1 (Panax ginseng (Korean ginseng)).